Consider the following 232-residue polypeptide: MAQSKRVKAIAAAVVPGKTYAFEDAIKILKTSTKAKFVESIDVAVRLGVDAKKSDQQVRGSTVLPAGTGKSVRVAVFAPAGAKADEALAAGAEAVGMDDLAEKMQAGDLNYDVVIATPDAMRVVGKLGTLLGPRGLMPNPKVGTVSPNPGEAVKNAKSGQVRYRTDKAGIIHCTIGKASFDDEALKSNLQALLLDLVKAKPATSKGTYLQKVSVSSTMGPGVTVDQSSLSLK.

This sequence belongs to the universal ribosomal protein uL1 family. In terms of assembly, part of the 50S ribosomal subunit.

Binds directly to 23S rRNA. The L1 stalk is quite mobile in the ribosome, and is involved in E site tRNA release. Its function is as follows. Protein L1 is also a translational repressor protein, it controls the translation of the L11 operon by binding to its mRNA. The chain is Large ribosomal subunit protein uL1 from Xanthomonas campestris pv. campestris (strain B100).